Consider the following 188-residue polypeptide: Pyridoxal 5'-phosphate synthase subunit PdxT (188 aa).

47-49 (GES) is an L-glutamine binding site. The active-site Nucleophile is the Cys79. L-glutamine contacts are provided by residues Arg105 and 134–135 (IR). Catalysis depends on charge relay system residues His170 and Glu172.

It belongs to the glutaminase PdxT/SNO family. In terms of assembly, in the presence of PdxS, forms a dodecamer of heterodimers. Only shows activity in the heterodimer.

The catalysed reaction is aldehydo-D-ribose 5-phosphate + D-glyceraldehyde 3-phosphate + L-glutamine = pyridoxal 5'-phosphate + L-glutamate + phosphate + 3 H2O + H(+). It catalyses the reaction L-glutamine + H2O = L-glutamate + NH4(+). Its pathway is cofactor biosynthesis; pyridoxal 5'-phosphate biosynthesis. In terms of biological role, catalyzes the hydrolysis of glutamine to glutamate and ammonia as part of the biosynthesis of pyridoxal 5'-phosphate. The resulting ammonia molecule is channeled to the active site of PdxS. The chain is Pyridoxal 5'-phosphate synthase subunit PdxT from Listeria innocua serovar 6a (strain ATCC BAA-680 / CLIP 11262).